The chain runs to 354 residues: Trans-3-hydroxy-L-proline dehydratase (354 aa).

Cys-104 acts as the Proton acceptor in catalysis. Substrate is bound by residues 105 to 106 (GH), Asp-269, and 274 to 275 (GS).

This sequence belongs to the proline racemase family. Homodimer. In terms of tissue distribution, ubiquitously expressed.

It catalyses the reaction trans-3-hydroxy-L-proline = 1-pyrroline-2-carboxylate + H2O. Its function is as follows. Catalyzes the dehydration of trans-3-hydroxy-L-proline to Delta(1)-pyrroline-2-carboxylate (Pyr2C). May be required to degrade trans-3-hydroxy-L-proline from the diet and originating from the degradation of proteins such as collagen-IV that contain it. This Homo sapiens (Human) protein is Trans-3-hydroxy-L-proline dehydratase (L3HYPDH).